Consider the following 102-residue polypeptide: Vacuolar ATPase assembly integral membrane protein VMA21 homolog (102 aa).

At 1–33 (MTTSSSSEPSTMATLFPNFRDQEVQSAVKNLLT) the chain is on the cytoplasmic side. The helical transmembrane segment at 34–54 (YSLVILIVPLASMFLLKQFFF) threads the bilayer. At 55–67 (EGLLGVSANDALT) the chain is on the lumenal side. The helical transmembrane segment at 68–88 (YSAIIAVVLVHVVLGIWLFAA) threads the bilayer. Topologically, residues 89 to 102 (TKQEDRKKRENKQD) are cytoplasmic.

This sequence belongs to the VMA21 family.

It localises to the endoplasmic reticulum membrane. The protein resides in the endoplasmic reticulum-Golgi intermediate compartment membrane. It is found in the cytoplasmic vesicle. Its subcellular location is the COPII-coated vesicle membrane. Required for the assembly of the V0 complex of the vacuolar ATPase (V-ATPase) in the endoplasmic reticulum. The polypeptide is Vacuolar ATPase assembly integral membrane protein VMA21 homolog (Caenorhabditis elegans).